A 396-amino-acid polypeptide reads, in one-letter code: Elongation factor Tu 1 (396 aa).

The tr-type G domain maps to K10–E206. Positions G19–T26 are G1. G19–T26 provides a ligand contact to GTP. T26 contributes to the Mg(2+) binding site. Residues G60–N64 form a G2 region. The G3 stretch occupies residues D81–G84. GTP is bound by residues D81–H85 and N136–D139. The G4 stretch occupies residues N136 to D139. Residues S174–L176 are G5.

The protein belongs to the TRAFAC class translation factor GTPase superfamily. Classic translation factor GTPase family. EF-Tu/EF-1A subfamily. In terms of assembly, monomer.

The protein resides in the cytoplasm. The catalysed reaction is GTP + H2O = GDP + phosphate + H(+). GTP hydrolase that promotes the GTP-dependent binding of aminoacyl-tRNA to the A-site of ribosomes during protein biosynthesis. In Psychrobacter sp. (strain PRwf-1), this protein is Elongation factor Tu 1.